A 225-amino-acid polypeptide reads, in one-letter code: PKHD-type hydroxylase YbiX (225 aa).

Positions 78–177 (TLSTPLFNRY…RVASFMWIQS (100 aa)) constitute a Fe2OG dioxygenase domain. Histidine 96, aspartate 98, and histidine 158 together coordinate Fe cation. Arginine 168 contacts 2-oxoglutarate.

Requires Fe(2+) as cofactor. L-ascorbate serves as cofactor.

The protein is PKHD-type hydroxylase YbiX of Escherichia coli O17:K52:H18 (strain UMN026 / ExPEC).